A 232-amino-acid polypeptide reads, in one-letter code: MRIDVVTLNPRIIESASEEGILKQALKKGLLELFVHQLRDYARDKHKTVDDRPYGGGPGMVLKCEPIFEAVEAIGWCKDKDTVVCPSPSGIKFDQQLAKDLSKRNRLIFICGQYEGIDQRVIDQLVDLEICIGDYILSSGTIAALVIIDSVVRLIPGVLGNQDSILDESFEDFLLEGPQYTRPRKFRDWEVPAVLLSGDHRRILLWRKRLSEEKTEKMRKDLWEARKKGERI.

S-adenosyl-L-methionine-binding positions include glycine 112 and 132 to 137 (IGDYIL).

It belongs to the RNA methyltransferase TrmD family. As to quaternary structure, homodimer.

Its subcellular location is the cytoplasm. It carries out the reaction guanosine(37) in tRNA + S-adenosyl-L-methionine = N(1)-methylguanosine(37) in tRNA + S-adenosyl-L-homocysteine + H(+). Specifically methylates guanosine-37 in various tRNAs. This is tRNA (guanine-N(1)-)-methyltransferase from Methylacidiphilum infernorum (isolate V4) (Methylokorus infernorum (strain V4)).